The primary structure comprises 114 residues: Iron-sulfur cluster insertion protein ErpA (114 aa).

The iron-sulfur cluster site is built by Cys-42, Cys-106, and Cys-108.

The protein belongs to the HesB/IscA family. In terms of assembly, homodimer. It depends on iron-sulfur cluster as a cofactor.

In terms of biological role, required for insertion of 4Fe-4S clusters for at least IspG. This is Iron-sulfur cluster insertion protein ErpA from Yersinia pseudotuberculosis serotype O:1b (strain IP 31758).